Here is a 1146-residue protein sequence, read N- to C-terminus: Large proline-rich protein BAG6 (1146 aa).

The residue at position 1 (Met1) is an N-acetylmethionine. The 76-residue stretch at 17–92 (LEVLVKTLDS…HLVERAPPQT (76 aa)) folds into the Ubiquitin-like domain. Disordered stretches follow at residues 87-128 (RAPP…HDRN), 186-268 (RGGT…HPSP), 381-436 (TMTG…TSHP), 457-525 (QDSG…QGAG), and 555-618 (PGMA…SAAD). Ser96 is modified (phosphoserine). The span at 96–108 (SGASSGTGSASAT) shows a compositional bias: low complexity. Over residues 109-122 (HGGGPLPGTRGPGA) the composition is skewed to gly residues. A Phosphothreonine modification is found at Thr117. Polar residues predominate over residues 208-217 (VALNSQTSEP). 2 consecutive repeat copies span residues 236 to 265 (RPPT…APNH) and 410 to 438 (PSSA…HPRV). The interval 236–650 (RPPTQTPELP…LASPTITVAV (415 aa)) is 4 X 29 AA approximate repeats. Over residues 239-257 (TQTPELPPSGPAPAGPAPA) the composition is skewed to pro residues. Residues 394–413 (GAEAASPGSGQASSLPPSSA) are compositionally biased toward low complexity. Composition is skewed to pro residues over residues 422–433 (APPPGPAPPPAT) and 502–515 (PTPP…PGGP). Low complexity-rich tracts occupy residues 555 to 573 (PGMA…AQAP) and 583 to 601 (PATA…TAGP). Tandem repeats lie at residues 589–616 (SAGT…QPSA) and 622–650 (SQLL…TVAV). The segment covering 603–614 (PGGPAQPPPPQP) has biased composition (pro residues). Disordered stretches follow at residues 666 to 711 (ASQA…ESLP) and 961 to 1146 (PQAL…ADDP). Pro residues predominate over residues 670-694 (APPPPPPPPPPPPAPEQQTTPPPGS). Basic and acidic residues predominate over residues 977 to 986 (TSPEPQREDA). Phosphoserine occurs at positions 978 and 987. The segment covering 1021–1034 (AEPWAAAVPPEWVP) has biased composition (low complexity). The interval 1024–1054 (WAAAVPPEWVPIIQQDIQSQRKVKPQPPLSD) is required for interaction with GET4. The Nuclear localization site motif lies at 1026-1068 (AAVPPEWVPIIQQDIQSQRKVKPQPPLSDAYLSGMPAKRRKTM). The segment at 1036-1146 (IQQDIQSQRK…NAHRAFADDP (111 aa)) is sufficient for the delivery of client proteins to the endoplasmic reticulum. Position 1067 is a phosphothreonine (Thr1067). The BAG-similar domain, required and sufficient for interaction with UBL4A stretch occupies residues 1072 to 1129 (GPQLLLSEAVSRAAKAAGARPLTSPESLSRDLEAPEVQESYRQQLRSDIQKRLQEDPN). The span at 1080–1090 (AVSRAAKAAGA) shows a compositional bias: low complexity. Phosphoserine is present on residues Ser1095 and Ser1131.

In terms of assembly, component of the BAG6/BAT3 complex, also named BAT3 complex, at least composed of BAG6, UBL4A and GET4/TRC35. Interacts with GET4; the interaction is direct and localizes BAG6 in the cytosol. Interacts with UBL4A; the interaction is direct and required for UBL4A protein stability. Interacts with AIFM1. Interacts with HSPA2. Interacts with CTCFL. Interacts with p300/EP300. Interacts (via ubiquitin-like domain) with RNF126; required for BAG6-dependent ubiquitination of proteins mislocalized to the cytosol. Interacts (via ubiquitin-like domain) with SGTA; SGTA competes with RNF126 by binding the same region of BAG6, thereby promoting deubiquitination of BAG6-target proteins and rescuing them from degradation. Interacts with ricin A chain. Interacts with VCP and AMFR; both form the VCP/p97-AMFR/gp78 complex. Interacts with SYVN1. Interacts with USP13; the interaction is direct and may mediate UBL4A deubiquitination. Interacts with ZFAND2B. Interacts with KPNA2. Interacts with UBQLN4. Post-translationally, ricin can induce a cleavage by the caspase CASP3. The released C-terminal peptide induces apoptosis.

It is found in the cytoplasm. Its subcellular location is the cytosol. The protein localises to the nucleus. The protein resides in the secreted. It localises to the extracellular exosome. In terms of biological role, ATP-independent molecular chaperone preventing the aggregation of misfolded and hydrophobic patches-containing proteins. Functions as part of a cytosolic protein quality control complex, the BAG6/BAT3 complex, which maintains these client proteins in a soluble state and participates in their proper delivery to the endoplasmic reticulum or alternatively can promote their sorting to the proteasome where they undergo degradation. The BAG6/BAT3 complex is involved in the post-translational delivery of tail-anchored/type II transmembrane proteins to the endoplasmic reticulum membrane. Recruited to ribosomes, it interacts with the transmembrane region of newly synthesized tail-anchored proteins and together with SGTA and ASNA1 mediates their delivery to the endoplasmic reticulum. Client proteins that cannot be properly delivered to the endoplasmic reticulum are ubiquitinated by RNF126, an E3 ubiquitin-protein ligase associated with BAG6 and are sorted to the proteasome. SGTA which prevents the recruitment of RNF126 to BAG6 may negatively regulate the ubiquitination and the proteasomal degradation of client proteins. Similarly, the BAG6/BAT3 complex also functions as a sorting platform for proteins of the secretory pathway that are mislocalized to the cytosol either delivering them to the proteasome for degradation or to the endoplasmic reticulum. The BAG6/BAT3 complex also plays a role in the endoplasmic reticulum-associated degradation (ERAD), a quality control mechanism that eliminates unwanted proteins of the endoplasmic reticulum through their retrotranslocation to the cytosol and their targeting to the proteasome. It maintains these retrotranslocated proteins in an unfolded yet soluble state condition in the cytosol to ensure their proper delivery to the proteasome. BAG6 is also required for selective ubiquitin-mediated degradation of defective nascent chain polypeptides by the proteasome. In this context, it may participate in the production of antigenic peptides and play a role in antigen presentation in immune response. BAG6 is also involved in endoplasmic reticulum stress-induced pre-emptive quality control, a mechanism that selectively attenuates the translocation of newly synthesized proteins into the endoplasmic reticulum and reroutes them to the cytosol for proteasomal degradation. BAG6 may ensure the proper degradation of these proteins and thereby protects the endoplasmic reticulum from protein overload upon stress. By inhibiting the polyubiquitination and subsequent proteasomal degradation of HSPA2 it may also play a role in the assembly of the synaptonemal complex during spermatogenesis. Also positively regulates apoptosis by interacting with and stabilizing the proapoptotic factor AIFM1. By controlling the steady-state expression of the IGF1R receptor, indirectly regulates the insulin-like growth factor receptor signaling pathway. Involved in DNA damage-induced apoptosis: following DNA damage, accumulates in the nucleus and forms a complex with p300/EP300, enhancing p300/EP300-mediated p53/TP53 acetylation leading to increase p53/TP53 transcriptional activity. When nuclear, may also act as a component of some chromatin regulator complex that regulates histone 3 'Lys-4' dimethylation (H3K4me2). Its function is as follows. Released extracellularly via exosomes, it is a ligand of the natural killer/NK cells receptor NCR3 and stimulates NK cells cytotoxicity. It may thereby trigger NK cells cytotoxicity against neighboring tumor cells and immature myeloid dendritic cells (DC). Functionally, may mediate ricin-induced apoptosis. This is Large proline-rich protein BAG6 from Rattus norvegicus (Rat).